The sequence spans 286 residues: Bifunctional protein FolD (286 aa).

NADP(+) is bound by residues 166-168 (GRS) and Ser191.

Belongs to the tetrahydrofolate dehydrogenase/cyclohydrolase family. In terms of assembly, homodimer.

The enzyme catalyses (6R)-5,10-methylene-5,6,7,8-tetrahydrofolate + NADP(+) = (6R)-5,10-methenyltetrahydrofolate + NADPH. The catalysed reaction is (6R)-5,10-methenyltetrahydrofolate + H2O = (6R)-10-formyltetrahydrofolate + H(+). Its pathway is one-carbon metabolism; tetrahydrofolate interconversion. Its function is as follows. Catalyzes the oxidation of 5,10-methylenetetrahydrofolate to 5,10-methenyltetrahydrofolate and then the hydrolysis of 5,10-methenyltetrahydrofolate to 10-formyltetrahydrofolate. This Lactiplantibacillus plantarum (strain ATCC BAA-793 / NCIMB 8826 / WCFS1) (Lactobacillus plantarum) protein is Bifunctional protein FolD.